Here is a 321-residue protein sequence, read N- to C-terminus: Thioredoxin reductase (321 aa).

36-43 (TGMEKGGQ) serves as a coordination point for FAD. C136 and C139 are disulfide-bonded. 287-296 (DVMDHIYRQA) lines the FAD pocket.

This sequence belongs to the class-II pyridine nucleotide-disulfide oxidoreductase family. As to quaternary structure, homodimer. The cofactor is FAD.

It localises to the cytoplasm. The catalysed reaction is [thioredoxin]-dithiol + NADP(+) = [thioredoxin]-disulfide + NADPH + H(+). This chain is Thioredoxin reductase (trxB), found in Escherichia coli O157:H7.